The following is a 125-amino-acid chain: Small ribosomal subunit protein uS13 (125 aa).

This sequence belongs to the universal ribosomal protein uS13 family. Part of the 30S ribosomal subunit. Forms a loose heterodimer with protein S19. Forms two bridges to the 50S subunit in the 70S ribosome.

Its function is as follows. Located at the top of the head of the 30S subunit, it contacts several helices of the 16S rRNA. In the 70S ribosome it contacts the 23S rRNA (bridge B1a) and protein L5 of the 50S subunit (bridge B1b), connecting the 2 subunits; these bridges are implicated in subunit movement. Contacts the tRNAs in the A and P-sites. This is Small ribosomal subunit protein uS13 from Gluconobacter oxydans (strain 621H) (Gluconobacter suboxydans).